Consider the following 696-residue polypeptide: Interleukin-1 receptor accessory protein-like 1 (696 aa).

Positions 1–18 are cleaved as a signal peptide; the sequence is MKAPIPHLILLYATFTQS. Residues 19–134 enclose the Ig-like C2-type 1 domain; sequence LKVVTKRGSA…YCMKVSISLT (116 aa). The Extracellular segment spans residues 19–357; that stretch reads LKVVTKRGSA…LLHKRELMYT (339 aa). 2 disulfide bridges follow: cysteine 31–cysteine 126 and cysteine 53–cysteine 118. N-linked (GlcNAc...) asparagine glycosylation is found at asparagine 63, asparagine 122, and asparagine 138. Cystine bridges form between cysteine 143/cysteine 185 and cysteine 164/cysteine 216. Ig-like C2-type domains follow at residues 143–232 and 242–350; these read CYNS…TELT and PKLL…VLLH. N-linked (GlcNAc...) asparagine glycosylation is found at asparagine 213, asparagine 264, and asparagine 331. A disulfide bridge links cysteine 267 with cysteine 334. Residues 358–378 traverse the membrane as a helical segment; it reads VELAGGLGAILLLLVCLVTIY. Over 379-696 the chain is Cytoplasmic; it reads KCYKIEIMLF…RETSISSVIW (318 aa). Residues 403-559 form the TIR domain; sequence KDYDAYLSYT…KFWKRLQYEM (157 aa). Residue glutamate 491 is part of the active site. Residues 549–644 are interaction with NCS1; that stretch reads SKFWKRLQYE…TGTLPLTSIG (96 aa). Residues 659–680 form a disordered region; it reads GQRPQTKSSREQNPDEAHTNSA. A compositionally biased stretch (basic and acidic residues) spans 666–676; that stretch reads SSREQNPDEAH.

This sequence belongs to the interleukin-1 receptor family. In terms of assembly, homodimer. Interacts (calcium-independent) with NCS1. Interacts (via the first immunoglobilin domain) with PTPRD (via the second immunoglobilin domain); this interaction is PTPRD-splicing-dependent and induces pre- and post-synaptic differentiation of neurons and is required for IL1RAPL1-mediated synapse formation. Detected at low levels in heart, skeletal muscle, ovary, skin, amygdala, caudate nucleus, corpus callosum, hippocampus, substantia nigra and thalamus. Detected at very low levels in tonsil, prostate, testis, small intestine, placenta, colon and fetal liver.

Its subcellular location is the cell membrane. It localises to the cytoplasm. The protein resides in the cell projection. The protein localises to the axon. It is found in the dendrite. The enzyme catalyses NAD(+) + H2O = ADP-D-ribose + nicotinamide + H(+). Its function is as follows. May regulate secretion and presynaptic differentiation through inhibition of the activity of N-type voltage-gated calcium channel. May activate the MAP kinase JNK. Plays a role in neurite outgrowth. During dendritic spine formation can bidirectionally induce pre- and post-synaptic differentiation of neurons by trans-synaptically binding to PTPRD. This is Interleukin-1 receptor accessory protein-like 1 (IL1RAPL1) from Homo sapiens (Human).